The chain runs to 124 residues: Urease subunit beta (124 aa).

The protein belongs to the urease beta subunit family. In terms of assembly, heterotrimer of UreA (gamma), UreB (beta) and UreC (alpha) subunits. Three heterotrimers associate to form the active enzyme.

The protein resides in the cytoplasm. It catalyses the reaction urea + 2 H2O + H(+) = hydrogencarbonate + 2 NH4(+). Its pathway is nitrogen metabolism; urea degradation; CO(2) and NH(3) from urea (urease route): step 1/1. The protein is Urease subunit beta of Halalkalibacterium halodurans (strain ATCC BAA-125 / DSM 18197 / FERM 7344 / JCM 9153 / C-125) (Bacillus halodurans).